The primary structure comprises 294 residues: Potassium-transporting ATPase subunit beta (294 aa).

Topologically, residues 1 to 36 (MAALQEKKSCSQRMAEFRQYCWNPDTGQMLGRTPAR) are cytoplasmic. The helical; Signal-anchor for type II membrane protein transmembrane segment at 37–57 (WVWISLYYAAFYVVMTGLFAL) threads the bilayer. At 58–294 (CIYVLMQTID…KVEFKLTIQK (237 aa)) the chain is on the extracellular side. N-linked (GlcNAc...) asparagine glycans are attached at residues Asn99, Asn103, Asn130, Asn146, and Asn161. Cysteines 131 and 152 form a disulfide. Cys162 and Cys178 are oxidised to a cystine. 2 N-linked (GlcNAc...) asparagine glycosylation sites follow: Asn193 and Asn225. Residues 194–294 (NTAPRVDCTF…KVEFKLTIQK (101 aa)) form an immunoglobulin-like region. Cys201 and Cys266 are disulfide-bonded.

Belongs to the X(+)/potassium ATPases subunit beta family. The ATPase pump is composed of two subunits: alpha (catalytic) and beta (regulatory). Interacts with alpha subunit ATP12A; this interaction is required for the formation of a functionally active pump and targeting at the plasma membrane. Interacts (via N-terminus) with alpha subunit ATP4A (via the P-domain). N-glycosylation is necessary for assembly and functional expression of the pump at the plasma membrane. Stomach.

It localises to the apical cell membrane. Its subcellular location is the cell membrane. In terms of biological role, the beta subunit of the gastric H(+)/K(+) ATPase pump which transports H(+) ions in exchange for K(+) ions across the apical membrane of parietal cells. Plays a structural and regulatory role in the assembly and membrane targeting of a functionally active pump. Within a transport cycle, the transfer of a H(+) ion across the membrane is coupled to ATP hydrolysis and is associated with a transient phosphorylation of the alpha subunit that shifts the pump conformation from inward-facing (E1) to outward-facing state (E2). Interacts with the phosphorylation domain of the alpha subunit and functions as a ratchet, stabilizing the lumenal-open E2 conformation and preventing the reverse reaction of the transport cycle. The chain is Potassium-transporting ATPase subunit beta (Atp4b) from Rattus norvegicus (Rat).